Reading from the N-terminus, the 328-residue chain is MKPAMETAAEENTEQSQERKVNSRAEMEIGRYHWMYPGSKNHQYRPVPNLGDRAGPLSSPGCFECCIKCLGGVPYASLVATILCFSGVALFCGCGHVALAGTVAILEQHFSTNTSDHALLSEVIQLMQYVIYGIASFFFLYGIILLAEGFYTTSAVKELHGEFKTTACGRCISGMFVFLTYVLGVAWLGVFGFSAVPVFMFYNIWSTCEVIKSPQSNGTSGVEQICVDVRQYGIIPWNAFPGKICGSALENICNTNEFYMSYHLFIVACAGAGATVIALIHFLMILSSNWAYLKDASKMQAYQDIKAKEEQELQDIQSRSKEQLNSYT.

The tract at residues 1–22 (MKPAMETAAEENTEQSQERKVN) is disordered. Residues 71–91 (GGVPYASLVATILCFSGVALF) form a helical membrane-spanning segment. A glycan (N-linked (GlcNAc...) asparagine) is linked at N113. 2 helical membrane passes run 130 to 150 (VIYGIASFFFLYGIILLAEGF) and 176 to 196 (FVFLTYVLGVAWLGVFGFSAV). A glycan (N-linked (GlcNAc...) asparagine) is linked at N217. The helical transmembrane segment at 265–285 (FIVACAGAGATVIALIHFLMI) threads the bilayer. 3 positions are modified to phosphoserine: S318, S320, and S326.

It belongs to the myelin proteolipid protein family. Interacts with SERT. Widely expressed. In the brain, expressed in neurons and oligodendrocytes.

It is found in the membrane. The protein resides in the cell membrane. Its function is as follows. May be involved in neural development. Involved in regulation of osteoblast function and bone formation. Involved in matrix vesicle release by osteoblasts; this function seems to involve maintenance of the actin cytoskeleton. May be involved in cellular trafficking of SERT and thereby in regulation of serotonin uptake. The protein is Neuronal membrane glycoprotein M6-b (Gpm6b) of Mus musculus (Mouse).